A 102-amino-acid chain; its full sequence is Protamine-2 (102 aa).

The disordered stretch occupies residues 1 to 102 (MVRYRVRSPS…RTRRRTCRKH (102 aa)). A phosphoserine mark is found at S8, S10, and S37. Basic and acidic residues predominate over residues 39-48 (EHVEVYERTH). Residues 49-102 (GHSHYRRRHCSRRRLRRIHRQQHRSCRRRKRRSCRHRRRHRRGCRTRRRTCRKH) are compositionally biased toward basic residues.

This sequence belongs to the protamine P2 family. As to quaternary structure, interacts with TDRP. In terms of processing, proteolytic processing into mature chains is required for histone eviction during spermatogenesis. Transition proteins (TNP1 and TNP2) are required for processing. In terms of tissue distribution, testis.

Its subcellular location is the nucleus. The protein resides in the chromosome. Functionally, protamines substitute for histones in the chromatin of sperm during the haploid phase of spermatogenesis. They compact sperm DNA into a highly condensed, stable and inactive complex. This Pan paniscus (Pygmy chimpanzee) protein is Protamine-2 (PRM2).